A 197-amino-acid polypeptide reads, in one-letter code: Molybdenum cofactor guanylyltransferase (197 aa).

Residues 10–12, K23, N51, D69, and D99 contribute to the GTP site; that span reads LAG. D99 lines the Mg(2+) pocket.

The protein belongs to the MobA family. In terms of assembly, monomer. Requires Mg(2+) as cofactor.

It localises to the cytoplasm. It catalyses the reaction Mo-molybdopterin + GTP + H(+) = Mo-molybdopterin guanine dinucleotide + diphosphate. Its function is as follows. Transfers a GMP moiety from GTP to Mo-molybdopterin (Mo-MPT) cofactor (Moco or molybdenum cofactor) to form Mo-molybdopterin guanine dinucleotide (Mo-MGD) cofactor. The protein is Molybdenum cofactor guanylyltransferase of Shewanella sp. (strain MR-4).